We begin with the raw amino-acid sequence, 70 residues long: MMYKLGVLLIICLLLFPLTAVPQDGDQPADRPAERMQDDISFEHDRFFDPVKRCCKYGWTCWLGCSPCCG.

An N-terminal signal peptide occupies residues 1-20 (MMYKLGVLLIICLLLFPLTA). Residues 21 to 53 (VPQDGDQPADRPAERMQDDISFEHDRFFDPVKR) constitute a propeptide that is removed on maturation. 3 cysteine pairs are disulfide-bonded: Cys-54/Cys-69, Cys-55/Cys-65, and Cys-61/Cys-68. The residue at position 67 (Pro-67) is a 4-hydroxyproline; partial; in major form. Cys-69 is subject to Cysteine amide.

This sequence belongs to the conotoxin M superfamily. In terms of processing, contains 3 disulfide bonds. Expressed by the venom duct.

The protein resides in the secreted. Functionally, mu-conotoxins block voltage-gated sodium channels (Nav). This is Mu-conotoxin-like Am3.4 from Conus amadis (Amadis cone).